Consider the following 536-residue polypeptide: Plasmepsin V (536 aa).

The N-terminal stretch at 1–34 (MVGASLGPPGRGSLSRLIRLVICVLTLCALSVQG) is a signal peptide. Over 35-492 (RSESTEGHSK…RKDNIFLKIP (458 aa)) the chain is Lumenal. One can recognise a Peptidase A1 domain in the interval 62–462 (YFLDIDIGTP…DIQKNRIGFV (401 aa)). The active site involves D80. Cystine bridges form between C90/C172, C93/C96, C117/C128, C122/C133, C220/C466, C337/C382, and C391/C427. Positions 244 to 258 (SKSVSGQGSGPVSES) are enriched in low complexity. The segment at 244–264 (SKSVSGQGSGPVSESLSESGE) is disordered. Residue D313 is part of the active site. Residues 493 to 513 (FFYLYSLFVVFALSVLLSLVF) traverse the membrane as a helical segment. Over 514–536 (YVRRLYHMEYSPLPSEGKAPADA) the chain is Cytoplasmic.

Belongs to the peptidase A1 family. Component of a complex composed of SPC25 and PMV; the interaction is mediated via the transmembrane domains. The complex interacts with the SEC61 channel-forming translocon complex and is involved in the recognition and import of PEXEL motif-containing proteins into the ER for subsequent export. In terms of processing, it is not clear if the zymogen has a cleavable propeptide. Cleavage of the putative propeptide is dispensable for catalytic activity.

Its subcellular location is the endoplasmic reticulum membrane. Its activity is regulated as follows. Inhibited by peptidomimetic inhibitors such as WEHI-842. During the asexual blood stage, plays an essential role in the export of several proteins into the host erythrocytes by cleaving the pentameric localization motif RxLxE/Q/D (termed Plasmodium export element (PEXEL)) located downstream of the N-terminal secretory signal sequence. Specifically, cleaves after the leucine residue in the RxLxE/Q/D (or RxLxxE) motif of exported proteins including EMP1. Also, by regulating protein export, plays an essential role in gametocyte development and thus parasite transmission to the mosquito vector. This chain is Plasmepsin V, found in Plasmodium vivax (strain Salvador I).